A 362-amino-acid chain; its full sequence is Peptide chain release factor 1 (362 aa).

An N5-methylglutamine modification is found at Gln-236.

This sequence belongs to the prokaryotic/mitochondrial release factor family. In terms of processing, methylated by PrmC. Methylation increases the termination efficiency of RF1.

It localises to the cytoplasm. In terms of biological role, peptide chain release factor 1 directs the termination of translation in response to the peptide chain termination codons UAG and UAA. The polypeptide is Peptide chain release factor 1 (Lactobacillus johnsonii (strain CNCM I-12250 / La1 / NCC 533)).